The primary structure comprises 210 residues: Adenylate kinase (210 aa).

An ATP-binding site is contributed by 10-15 (GSGKGT). Residues 30 to 59 (STGDLFRANISNATPLGKEIKQIVENGQLV) are NMP. AMP-binding positions include Thr31, Arg36, 57-59 (QLV), 85-88 (GFPR), and Gln92. The segment at 121-158 (GRRICQSCGGIFNIYTLPTKEKGICDLCKGSLYQRKDD) is LID. Position 122 (Arg122) interacts with ATP. 2 residues coordinate Zn(2+): Cys125 and Cys128. 131–132 (IF) provides a ligand contact to ATP. Cys145 and Cys148 together coordinate Zn(2+). 2 residues coordinate AMP: Arg155 and Arg166. Lys194 provides a ligand contact to ATP.

The protein belongs to the adenylate kinase family. As to quaternary structure, monomer.

The protein resides in the cytoplasm. The enzyme catalyses AMP + ATP = 2 ADP. The protein operates within purine metabolism; AMP biosynthesis via salvage pathway; AMP from ADP: step 1/1. Functionally, catalyzes the reversible transfer of the terminal phosphate group between ATP and AMP. Plays an important role in cellular energy homeostasis and in adenine nucleotide metabolism. In Borrelia turicatae (strain 91E135), this protein is Adenylate kinase.